The primary structure comprises 147 residues: Lysozyme C (147 aa).

Positions 1–17 (MRSLLILVLCFLPLAAP) are cleaved as a signal peptide. One can recognise a C-type lysozyme domain in the interval 19 to 147 (KVYGRCELAA…VNVWIRGCRL (129 aa)). Intrachain disulfides connect Cys-24/Cys-145, Cys-48/Cys-133, Cys-82/Cys-98, and Cys-94/Cys-112. Active-site residues include Glu-53 and Asp-70.

The protein belongs to the glycosyl hydrolase 22 family. In terms of assembly, monomer. By an evolutionary shift in the site of proteolytic cleavage of prelysozyme, Gly-18 became the N-terminal residue of the mature protein instead of being the C-terminal residue of the signal sequence as in other birds.

Its subcellular location is the secreted. The catalysed reaction is Hydrolysis of (1-&gt;4)-beta-linkages between N-acetylmuramic acid and N-acetyl-D-glucosamine residues in a peptidoglycan and between N-acetyl-D-glucosamine residues in chitodextrins.. Its function is as follows. Lysozymes have primarily a bacteriolytic function; those in tissues and body fluids are associated with the monocyte-macrophage system and enhance the activity of immunoagents. In Phasianus colchicus colchicus (Black-necked pheasant), this protein is Lysozyme C (LYZ).